A 356-amino-acid chain; its full sequence is NADH-quinone oxidoreductase subunit H (356 aa).

A run of 8 helical transmembrane segments spans residues 18–38 (IVMV…IAYI), 87–107 (GVFL…WAVI), 120–140 (VGIL…IMGG), 166–186 (IGFV…SAIV), 202–222 (WLTF…VFYV), 257–277 (LFML…AILF), 292–312 (WVPG…LIAM), and 333–353 (FLPL…FAGI).

The protein belongs to the complex I subunit 1 family. In terms of assembly, NDH-1 is composed of 14 different subunits. Subunits NuoA, H, J, K, L, M, N constitute the membrane sector of the complex.

It is found in the cell inner membrane. It catalyses the reaction a quinone + NADH + 5 H(+)(in) = a quinol + NAD(+) + 4 H(+)(out). NDH-1 shuttles electrons from NADH, via FMN and iron-sulfur (Fe-S) centers, to quinones in the respiratory chain. The immediate electron acceptor for the enzyme in this species is believed to be ubiquinone. Couples the redox reaction to proton translocation (for every two electrons transferred, four hydrogen ions are translocated across the cytoplasmic membrane), and thus conserves the redox energy in a proton gradient. This subunit may bind ubiquinone. In Nitrobacter winogradskyi (strain ATCC 25391 / DSM 10237 / CIP 104748 / NCIMB 11846 / Nb-255), this protein is NADH-quinone oxidoreductase subunit H.